Here is a 596-residue protein sequence, read N- to C-terminus: Elongation factor 4 (596 aa).

Residues 2–184 (KHIRNFSIIA…VIVEQIPPPE (183 aa)) form the tr-type G domain. GTP is bound by residues 14–19 (DHGKST) and 131–134 (NKID).

It belongs to the TRAFAC class translation factor GTPase superfamily. Classic translation factor GTPase family. LepA subfamily.

It is found in the cell inner membrane. The enzyme catalyses GTP + H2O = GDP + phosphate + H(+). In terms of biological role, required for accurate and efficient protein synthesis under certain stress conditions. May act as a fidelity factor of the translation reaction, by catalyzing a one-codon backward translocation of tRNAs on improperly translocated ribosomes. Back-translocation proceeds from a post-translocation (POST) complex to a pre-translocation (PRE) complex, thus giving elongation factor G a second chance to translocate the tRNAs correctly. Binds to ribosomes in a GTP-dependent manner. This Shewanella sp. (strain MR-7) protein is Elongation factor 4.